The primary structure comprises 94 residues: Integration host factor subunit beta (94 aa).

This sequence belongs to the bacterial histone-like protein family. Heterodimer of an alpha and a beta chain.

In terms of biological role, this protein is one of the two subunits of integration host factor, a specific DNA-binding protein that functions in genetic recombination as well as in transcriptional and translational control. In Haemophilus influenzae (strain ATCC 51907 / DSM 11121 / KW20 / Rd), this protein is Integration host factor subunit beta (ihfB).